Reading from the N-terminus, the 158-residue chain is Endoribonuclease YbeY (158 aa).

Zn(2+)-binding residues include H119, H123, and D129.

Belongs to the endoribonuclease YbeY family. It depends on Zn(2+) as a cofactor.

Its subcellular location is the cytoplasm. Functionally, single strand-specific metallo-endoribonuclease involved in late-stage 70S ribosome quality control and in maturation of the 3' terminus of the 16S rRNA. In Chlamydia pneumoniae (Chlamydophila pneumoniae), this protein is Endoribonuclease YbeY.